A 134-amino-acid chain; its full sequence is ATP synthase epsilon chain, chloroplastic (134 aa).

The protein belongs to the ATPase epsilon chain family. F-type ATPases have 2 components, CF(1) - the catalytic core - and CF(0) - the membrane proton channel. CF(1) has five subunits: alpha(3), beta(3), gamma(1), delta(1), epsilon(1). CF(0) has three main subunits: a, b and c.

The protein localises to the plastid. It localises to the chloroplast thylakoid membrane. Functionally, produces ATP from ADP in the presence of a proton gradient across the membrane. This Chlorella vulgaris (Green alga) protein is ATP synthase epsilon chain, chloroplastic.